The primary structure comprises 160 residues: Ribosomal RNA large subunit methyltransferase H (160 aa).

Residues L76, G108, and 127 to 132 (LGKMTW) contribute to the S-adenosyl-L-methionine site.

The protein belongs to the RNA methyltransferase RlmH family. Homodimer.

It is found in the cytoplasm. It carries out the reaction pseudouridine(1915) in 23S rRNA + S-adenosyl-L-methionine = N(3)-methylpseudouridine(1915) in 23S rRNA + S-adenosyl-L-homocysteine + H(+). Functionally, specifically methylates the pseudouridine at position 1915 (m3Psi1915) in 23S rRNA. The sequence is that of Ribosomal RNA large subunit methyltransferase H from Sinorhizobium fredii (strain NBRC 101917 / NGR234).